We begin with the raw amino-acid sequence, 1823 residues long: Vitellogenin (1823 aa).

A signal peptide spans 1-14 (MWKLLLVALAFALA). Residue glutamine 17 is modified to Pyrrolidone carboxylic acid. Residues 18–658 (FQPGKVYRYS…SPSGPLPRAV (641 aa)) enclose the Vitellogenin domain. The tract at residues 953 to 986 (KGLISQQQQQPHHQQQPHQHGQDQARAAYQRPWA) is disordered. The span at 958–976 (QQQQQPHHQQQPHQHGQDQ) shows a compositional bias: low complexity. A glycan (N-linked (GlcNAc...) asparagine) is linked at asparagine 1097. The segment at 1119–1289 (SDKDKDAKKP…SSSSSESKSL (171 aa)) is disordered. Low complexity-rich tracts occupy residues 1128–1149 (PPGSSSSSSSSSSSSSSSSSSD) and 1178–1192 (SSSSSSSSSSSSDSS). Over residues 1194–1206 (SPHKHGGAKRQHA) the composition is skewed to basic residues. Composition is skewed to low complexity over residues 1217 to 1238 (SHSSSSSSSSSSSSSSASKSFS) and 1253 to 1286 (SSSSSSSSDSSSSSSSSSSSSSSSSSSSSSSSES). Asparagine 1298 is a glycosylation site (N-linked (GlcNAc...) asparagine). A disordered region spans residues 1308–1351 (VPQRKPQTSRRHTPASSSSSSSSSSSSSSSSSSSDSDMTVSAES). Residues 1323–1344 (SSSSSSSSSSSSSSSSSSSDSD) show a composition bias toward low complexity. Positions 1564–1732 (SACELNEQSL…SWIAPDETCG (169 aa)) constitute a VWFD domain. Intrachain disulfides connect cysteine 1566-cysteine 1695 and cysteine 1589-cysteine 1731. Asparagine 1675 carries N-linked (GlcNAc...) asparagine glycosylation.

Post-translationally, what corresponds to phosvitin in other species is lost during maturation of vitellogenin to lipovitellin. Produced by the liver, secreted into the blood and then sequestered by receptor mediated endocytosis into growing oocytes, where it is generally cleaved, giving rise to the respective yolk components lipovitellins 1 and 2.

Precursor of the major egg-yolk proteins that are sources of nutrients during early development of oviparous organisms. The sequence is that of Vitellogenin from Ichthyomyzon unicuspis (Silver lamprey).